The primary structure comprises 1146 residues: Ankyrin repeat and fibronectin type-III domain-containing protein 1 (1146 aa).

2 ANK repeats span residues 133–162 and 170–199; these read QGNE…PEEL and EGLT…RESP. Residues 270–366 enclose the Fibronectin type-III domain; that stretch reads MPTNVCLMVT…TTTPACASPS (97 aa). Positions 607–614 are highly conserved peptide sequence; the sequence is GLYLGYLK. Disordered regions lie at residues 855-887, 945-964, and 1106-1146; these read NSTS…QPCS, VKTP…NPDH, and PWAS…SSML. Polar residues predominate over residues 1131-1146; it reads EGPTASPMSEILSSML.

May play a role in neuronal function. The protein is Ankyrin repeat and fibronectin type-III domain-containing protein 1 of Homo sapiens (Human).